The following is a 186-amino-acid chain: ATP synthase subunit delta (186 aa).

Belongs to the ATPase delta chain family. In terms of assembly, F-type ATPases have 2 components, F(1) - the catalytic core - and F(0) - the membrane proton channel. F(1) has five subunits: alpha(3), beta(3), gamma(1), delta(1), epsilon(1). F(0) has three main subunits: a(1), b(2) and c(10-14). The alpha and beta chains form an alternating ring which encloses part of the gamma chain. F(1) is attached to F(0) by a central stalk formed by the gamma and epsilon chains, while a peripheral stalk is formed by the delta and b chains.

Its subcellular location is the cell inner membrane. Its function is as follows. F(1)F(0) ATP synthase produces ATP from ADP in the presence of a proton or sodium gradient. F-type ATPases consist of two structural domains, F(1) containing the extramembraneous catalytic core and F(0) containing the membrane proton channel, linked together by a central stalk and a peripheral stalk. During catalysis, ATP synthesis in the catalytic domain of F(1) is coupled via a rotary mechanism of the central stalk subunits to proton translocation. In terms of biological role, this protein is part of the stalk that links CF(0) to CF(1). It either transmits conformational changes from CF(0) to CF(1) or is implicated in proton conduction. The sequence is that of ATP synthase subunit delta from Ruegeria pomeroyi (strain ATCC 700808 / DSM 15171 / DSS-3) (Silicibacter pomeroyi).